The following is an 878-amino-acid chain: Alanine--tRNA ligase (878 aa).

Histidine 567, histidine 571, cysteine 669, and histidine 673 together coordinate Zn(2+).

Belongs to the class-II aminoacyl-tRNA synthetase family. Requires Zn(2+) as cofactor.

It localises to the cytoplasm. The catalysed reaction is tRNA(Ala) + L-alanine + ATP = L-alanyl-tRNA(Ala) + AMP + diphosphate. Functionally, catalyzes the attachment of alanine to tRNA(Ala) in a two-step reaction: alanine is first activated by ATP to form Ala-AMP and then transferred to the acceptor end of tRNA(Ala). Also edits incorrectly charged Ser-tRNA(Ala) and Gly-tRNA(Ala) via its editing domain. The polypeptide is Alanine--tRNA ligase (Rickettsia massiliae (strain Mtu5)).